A 127-amino-acid chain; its full sequence is Protein yippee-like 4 (127 aa).

In terms of domain architecture, Yippee spans 27–124 (RTYSCVHCRA…IEMSHMVKDN (98 aa)). Zn(2+)-binding residues include cysteine 31, cysteine 34, cysteine 87, and cysteine 90. Phosphothreonine occurs at positions 92 and 93. Residue tyrosine 98 is modified to Phosphotyrosine.

It belongs to the yippee family. In terms of tissue distribution, detected in brain, spleen and testis.

The protein resides in the nucleus. It localises to the nucleolus. The chain is Protein yippee-like 4 (Ypel4) from Mus musculus (Mouse).